Here is a 173-residue protein sequence, read N- to C-terminus: Thaumatin-like protein PWIR2 (173 aa).

The signal sequence occupies residues 1 to 20 (MATSPVLFLLLAVFAAGASA).

It belongs to the thaumatin family.

The sequence is that of Thaumatin-like protein PWIR2 from Triticum aestivum (Wheat).